Here is a 1072-residue protein sequence, read N- to C-terminus: Carbamoyl phosphate synthase large chain (1072 aa).

Residues 1–401 (MPKRLDINTI…SLLKAVRSLE (401 aa)) form a carboxyphosphate synthetic domain region. Positions 129, 169, 175, 176, 208, 210, 215, 241, 242, 243, 284, and 298 each coordinate ATP. The region spanning 133–327 (RTLMQELNEP…IAKLAAKIAV (195 aa)) is the ATP-grasp 1 domain. Residues Gln-284, Glu-298, and Asn-300 each contribute to the Mg(2+) site. Gln-284, Glu-298, and Asn-300 together coordinate Mn(2+). An oligomerization domain region spans residues 402-546 (LGIYHLELDH…YSTYADENES (145 aa)). Positions 547 to 929 (IVTDRKSVVV…ALYKGLVASG (383 aa)) are carbamoyl phosphate synthetic domain. The ATP-grasp 2 domain maps to 671–861 (EAALTKLGIP…MANVATKVIL (191 aa)). Residues Arg-707, Arg-746, Glu-752, Gly-777, Val-778, His-779, Ser-780, Gln-820, and Glu-832 each coordinate ATP. 3 residues coordinate Mg(2+): Gln-820, Glu-832, and Asn-834. The Mn(2+) site is built by Gln-820, Glu-832, and Asn-834. The MGS-like domain maps to 930–1072 (INIPTHGSVI…QTKRHEVVHA (143 aa)). Residues 930–1072 (INIPTHGSVI…QTKRHEVVHA (143 aa)) form an allosteric domain region.

Belongs to the CarB family. Composed of two chains; the small (or glutamine) chain promotes the hydrolysis of glutamine to ammonia, which is used by the large (or ammonia) chain to synthesize carbamoyl phosphate. Tetramer of heterodimers (alpha,beta)4. It depends on Mg(2+) as a cofactor. The cofactor is Mn(2+).

It catalyses the reaction hydrogencarbonate + L-glutamine + 2 ATP + H2O = carbamoyl phosphate + L-glutamate + 2 ADP + phosphate + 2 H(+). The catalysed reaction is hydrogencarbonate + NH4(+) + 2 ATP = carbamoyl phosphate + 2 ADP + phosphate + 2 H(+). It participates in amino-acid biosynthesis; L-arginine biosynthesis; carbamoyl phosphate from bicarbonate: step 1/1. The protein operates within pyrimidine metabolism; UMP biosynthesis via de novo pathway; (S)-dihydroorotate from bicarbonate: step 1/3. Functionally, large subunit of the glutamine-dependent carbamoyl phosphate synthetase (CPSase). CPSase catalyzes the formation of carbamoyl phosphate from the ammonia moiety of glutamine, carbonate, and phosphate donated by ATP, constituting the first step of 2 biosynthetic pathways, one leading to arginine and/or urea and the other to pyrimidine nucleotides. The large subunit (synthetase) binds the substrates ammonia (free or transferred from glutamine from the small subunit), hydrogencarbonate and ATP and carries out an ATP-coupled ligase reaction, activating hydrogencarbonate by forming carboxy phosphate which reacts with ammonia to form carbamoyl phosphate. The protein is Carbamoyl phosphate synthase large chain of Bacillus thuringiensis (strain Al Hakam).